Here is a 158-residue protein sequence, read N- to C-terminus: Endoribonuclease YbeY (158 aa).

H119, H123, and D129 together coordinate Zn(2+).

The protein belongs to the endoribonuclease YbeY family. Requires Zn(2+) as cofactor.

Its subcellular location is the cytoplasm. In terms of biological role, single strand-specific metallo-endoribonuclease involved in late-stage 70S ribosome quality control and in maturation of the 3' terminus of the 16S rRNA. The polypeptide is Endoribonuclease YbeY (Chlamydia abortus (strain DSM 27085 / S26/3) (Chlamydophila abortus)).